The following is a 101-amino-acid chain: Small ribosomal subunit protein uS14A (101 aa).

Positions 31 to 69 are disordered; sequence IAAPGSSPEERAAAQQELRRQPRDASATRLRNRDAVDGR. Over residues 38 to 53 the composition is skewed to basic and acidic residues; it reads PEERAAAQQELRRQPR.

Belongs to the universal ribosomal protein uS14 family. Part of the 30S ribosomal subunit. Contacts proteins S3 and S10.

Binds 16S rRNA, required for the assembly of 30S particles and may also be responsible for determining the conformation of the 16S rRNA at the A site. The polypeptide is Small ribosomal subunit protein uS14A (Saccharopolyspora erythraea (strain ATCC 11635 / DSM 40517 / JCM 4748 / NBRC 13426 / NCIMB 8594 / NRRL 2338)).